Reading from the N-terminus, the 230-residue chain is Ion-translocating oxidoreductase complex subunit E (230 aa).

Over 1–17 the chain is Cytoplasmic; sequence MSENRTLMLNGMWNNNP. A run of 2 helical transmembrane segments spans residues 18–38 and 39–59; these read ALVQLLGLCPLLAVSSTVTNA and LGLGIATLLVLVGSNVTVSLV. Topologically, residues 60-68 are cytoplasmic; sequence RDYVPKEVR. The helical transmembrane segment at 69–89 threads the bilayer; the sequence is IPVFVMIIASLVTCVQLLMNA. Over 90–92 the chain is Periplasmic; it reads YAY. A helical membrane pass occupies residues 93 to 113; that stretch reads GLYLSLGIFIPLIVTNCIIIG. Residues 114-123 are Cytoplasmic-facing; that stretch reads RAEAFASKND. The helical transmembrane segment at 124–144 threads the bilayer; sequence VLPAALDGFWMGLGMTSVLVV. Residues 145 to 181 are Periplasmic-facing; the sequence is LGSLREIIGNGTLFDGADLLLGEWAKVLRIEVFHFDS. Residues 182–202 form a helical membrane-spanning segment; that stretch reads AFLLALLPPGAFIGVGFLIAA. Residues 203–230 are Cytoplasmic-facing; that stretch reads KSVIDKQIAARQPKQQKQAIERARVTNV.

Belongs to the NqrDE/RnfAE family. The complex is composed of six subunits: RnfA, RnfB, RnfC, RnfD, RnfE and RnfG.

It is found in the cell inner membrane. In terms of biological role, part of a membrane-bound complex that couples electron transfer with translocation of ions across the membrane. In Vibrio cholerae serotype O1 (strain ATCC 39541 / Classical Ogawa 395 / O395), this protein is Ion-translocating oxidoreductase complex subunit E.